The following is a 553-amino-acid chain: Dihydroxy-acid dehydratase (553 aa).

D78 lines the Mg(2+) pocket. C119 is a [2Fe-2S] cluster binding site. The Mg(2+) site is built by D120 and K121. K121 bears the N6-carboxylysine mark. C193 serves as a coordination point for [2Fe-2S] cluster. E441 is a Mg(2+) binding site. S467 serves as the catalytic Proton acceptor.

Belongs to the IlvD/Edd family. In terms of assembly, homodimer. [2Fe-2S] cluster serves as cofactor. It depends on Mg(2+) as a cofactor.

The catalysed reaction is (2R)-2,3-dihydroxy-3-methylbutanoate = 3-methyl-2-oxobutanoate + H2O. The enzyme catalyses (2R,3R)-2,3-dihydroxy-3-methylpentanoate = (S)-3-methyl-2-oxopentanoate + H2O. The protein operates within amino-acid biosynthesis; L-isoleucine biosynthesis; L-isoleucine from 2-oxobutanoate: step 3/4. It functions in the pathway amino-acid biosynthesis; L-valine biosynthesis; L-valine from pyruvate: step 3/4. In terms of biological role, functions in the biosynthesis of branched-chain amino acids. Catalyzes the dehydration of (2R,3R)-2,3-dihydroxy-3-methylpentanoate (2,3-dihydroxy-3-methylvalerate) into 2-oxo-3-methylpentanoate (2-oxo-3-methylvalerate) and of (2R)-2,3-dihydroxy-3-methylbutanoate (2,3-dihydroxyisovalerate) into 2-oxo-3-methylbutanoate (2-oxoisovalerate), the penultimate precursor to L-isoleucine and L-valine, respectively. In Geobacter sulfurreducens (strain ATCC 51573 / DSM 12127 / PCA), this protein is Dihydroxy-acid dehydratase.